Here is a 735-residue protein sequence, read N- to C-terminus: Two pore calcium channel protein 1B (735 aa).

Residues 1-76 (MEEYLLPGES…ELYFMFTRFD (76 aa)) are Cytoplasmic-facing. The chain crosses the membrane as a helical span at residues 77–97 (FLWSLNYLALVVLNFFEKPLW). Residues 98 to 125 (CSKHLAESCNNRDYYYLGELPFLTGAES) are Extracellular-facing. A helical transmembrane segment spans residues 126-146 (LIFEGVTLLLLIIHILFPISY). The Cytoplasmic portion of the chain corresponds to 147 to 161 (EGFNLYWRSLLNRLK). The chain crosses the membrane as a helical span at residues 162 to 182 (VILLLILVADIVVYILLPADF). Position 183 (Tyr-183) is a topological domain, extracellular. The chain crosses the membrane as a helical; Voltage-sensor span at residues 184–202 (YLPFRIAPYLRVVFFILNI). The Cytoplasmic portion of the chain corresponds to 203-208 (RELRDS). The chain crosses the membrane as a helical span at residues 209-229 (FFILAGMLGTYLNVVALSALF). At 230–248 (LLFSSWLAYVFFEDTRQGK) the chain is on the extracellular side. The pore-forming intramembrane region spans 249–263 (TTFTSYGTTLYQMFV). Residues 264–286 (LFTTSNNPDVWIPAYKDSRWYCL) lie on the Extracellular side of the membrane. Residues 287–307 (FFVLYVLLGVYFVTNLILAVV) traverse the membrane as a helical segment. Topologically, residues 308-431 (YDSFKSELVK…ASEKLRGFIR (124 aa)) are cytoplasmic. EF-hand domains follow at residues 325 to 360 (LRLR…LNKY) and 366 to 401 (ISGD…IGLR). Residues 432–452 (GATFEYIIVFVLLVNLVAVII) form a helical membrane-spanning segment. Topologically, residues 453–470 (ETTLDIQNNSGQTFWQKV) are extracellular. Asn-460 is a glycosylation site (N-linked (GlcNAc...) asparagine). The chain crosses the membrane as a helical span at residues 471 to 491 (EFTFGWLYVIEMALKVYTYGF). Residues 492–501 (ENYWRDGQNR) lie on the Cytoplasmic side of the membrane. A helical transmembrane segment spans residues 502-522 (FDFIVTWVIVIGETTTFVAPD). At 523-531 (DLTFLSNGE) the chain is on the extracellular side. The helical; Voltage-sensor transmembrane segment at 532 to 549 (WIRYLLIARMLRLIRLLM) threads the bilayer. Residues 550 to 560 (HVERYRAFVAT) lie on the Cytoplasmic side of the membrane. A helical membrane pass occupies residues 561–581 (FLTLIPSLMPYLGTIFCILCF). Topologically, residues 582-618 (YCSLGLQIFGGIVNTGNPNLAQTDLAGNDYLLFNFND) are extracellular. The segment at residues 619–633 (YPNGMVTLFNILVMG) is an intramembrane region (pore-forming). Topologically, residues 634–654 (NWQVWMQSYKELTGTSWTYAY) are extracellular. A helical membrane pass occupies residues 655–675 (FVSFYLISVLWLLNLIVAFVL). The Cytoplasmic portion of the chain corresponds to 676–735 (EAFQAEMDLEASARCVDGDDKEAKRERRRNVGTKTRSQRVDFLLHHMLRSELTECSNDNP).

It belongs to the calcium channel alpha-1 subunit (TC 1.A.1.11) family. Two pore calcium channel subfamily. As to quaternary structure, homodimer.

It localises to the membrane. Its activity is regulated as follows. Inhibited by Al(3+), La(3+) and Gd(3+). Up-regulated by H(2)O(2), cryptogein, salicylic acid (SA) and cold shock. Its function is as follows. Functions as a voltage-gated inward-rectifying Ca(2+) channel (VDCC) across the plasma membrane that mediates sucrose-induced Ca(2+) influx in autotrophically grown leaf cells. Acts as the major ROS-responsive Ca(2+) channel and is the possible target of Al-dependent inhibition. Plays a regulatory role in defense responses. This Nicotiana tabacum (Common tobacco) protein is Two pore calcium channel protein 1B (TPC1B).